We begin with the raw amino-acid sequence, 169 residues long: Copper-resistant cuproprotein CopI (169 aa).

Residues 1–20 (MIKKTLLVIALTFTVTTAFA) form the signal peptide. Positions 98, 153, 158, and 163 each coordinate Cu(2+).

Belongs to the CopI family.

The protein resides in the periplasm. In terms of biological role, involved in copper tolerance. Mediates copper tolerance in aerobiosis. May also mediate tolerance under anaerobiosis. Not required for virulence or colonization in the mouse model. The protein is Copper-resistant cuproprotein CopI of Vibrio cholerae serotype O1 (strain ATCC 39315 / El Tor Inaba N16961).